The following is a 244-amino-acid chain: Phosphoadenosine 5'-phosphosulfate reductase (244 aa).

Cysteine 239 serves as the catalytic Nucleophile; cysteine thiosulfonate intermediate.

This sequence belongs to the PAPS reductase family. CysH subfamily.

The protein resides in the cytoplasm. It catalyses the reaction [thioredoxin]-disulfide + sulfite + adenosine 3',5'-bisphosphate + 2 H(+) = [thioredoxin]-dithiol + 3'-phosphoadenylyl sulfate. It participates in sulfur metabolism; hydrogen sulfide biosynthesis; sulfite from sulfate: step 3/3. Its function is as follows. Catalyzes the formation of sulfite from phosphoadenosine 5'-phosphosulfate (PAPS) using thioredoxin as an electron donor. This chain is Phosphoadenosine 5'-phosphosulfate reductase, found in Zymomonas mobilis subsp. mobilis (strain ATCC 31821 / ZM4 / CP4).